The primary structure comprises 106 residues: Putative protein SH (106 aa).

Residues 48 to 106 (HSQQNNSGHQFGDRFHSKGHQDTEGRILWKEASTRTTDSTETADTQLVQRQGNGGICLS) form a disordered region. Basic and acidic residues predominate over residues 58–80 (FGDRFHSKGHQDTEGRILWKEAS). The span at 81–92 (TRTTDSTETADT) shows a compositional bias: low complexity.

As to expression, heart.

Its function is as follows. May be involved with the regulation of GNRH gene expression. It is not known if this protein is transcribed. The protein is Putative protein SH of Rattus norvegicus (Rat).